Reading from the N-terminus, the 224-residue chain is Thymidine kinase (224 aa).

ATP-binding positions include 19 to 26 (GPMFAGKT) and 93 to 96 (DEVQ). Glu94 serves as the catalytic Proton acceptor. Zn(2+)-binding residues include Cys150, Cys153, Cys188, and His191.

Belongs to the thymidine kinase family. In terms of assembly, homotetramer.

Its subcellular location is the cytoplasm. The enzyme catalyses thymidine + ATP = dTMP + ADP + H(+). The chain is Thymidine kinase from Mycoplasmoides gallisepticum (strain R(low / passage 15 / clone 2)) (Mycoplasma gallisepticum).